Consider the following 246-residue polypeptide: Pyruvate formate-lyase 1-activating enzyme (246 aa).

The Radical SAM core domain occupies 16–239 (VDGPGIRFIT…MERVKGILEQ (224 aa)). [4Fe-4S] cluster-binding residues include cysteine 30, cysteine 34, and cysteine 37. S-adenosyl-L-methionine-binding positions include 36–38 (YCH), glycine 79, 130–132 (DLK), and histidine 203.

The protein belongs to the organic radical-activating enzymes family. The cofactor is [4Fe-4S] cluster.

The protein resides in the cytoplasm. The enzyme catalyses glycyl-[formate C-acetyltransferase] + reduced [flavodoxin] + S-adenosyl-L-methionine = glycin-2-yl radical-[formate C-acetyltransferase] + semiquinone [flavodoxin] + 5'-deoxyadenosine + L-methionine + H(+). In terms of biological role, activation of pyruvate formate-lyase 1 under anaerobic conditions by generation of an organic free radical, using S-adenosylmethionine and reduced flavodoxin as cosubstrates to produce 5'-deoxy-adenosine. This Escherichia coli O157:H7 protein is Pyruvate formate-lyase 1-activating enzyme (pflA).